Reading from the N-terminus, the 300-residue chain is Hydroxyquinol 1,2-dioxygenase (300 aa).

Fe cation contacts are provided by Tyr-167, Tyr-200, His-224, and His-226.

It belongs to the intradiol ring-cleavage dioxygenase family. Requires Fe(3+) as cofactor.

The enzyme catalyses benzene-1,2,4-triol + O2 = maleylacetate + 2 H(+). Its pathway is aromatic compound metabolism. The protein operates within xenobiotic degradation. Functionally, involved in the degradation of para-nitrophenol (4-NP). Catalyzes the conversion of hydroxyquinol to malelylacetate. In Rhodococcus opacus (Nocardia opaca), this protein is Hydroxyquinol 1,2-dioxygenase (npcC).